We begin with the raw amino-acid sequence, 282 residues long: Bis(5'-nucleosyl)-tetraphosphatase, symmetrical (282 aa).

It belongs to the Ap4A hydrolase family.

The enzyme catalyses P(1),P(4)-bis(5'-adenosyl) tetraphosphate + H2O = 2 ADP + 2 H(+). Hydrolyzes diadenosine 5',5'''-P1,P4-tetraphosphate to yield ADP. The protein is Bis(5'-nucleosyl)-tetraphosphatase, symmetrical of Citrobacter koseri (strain ATCC BAA-895 / CDC 4225-83 / SGSC4696).